A 187-amino-acid polypeptide reads, in one-letter code: Elongation factor P (187 aa).

This sequence belongs to the elongation factor P family.

Its subcellular location is the cytoplasm. It functions in the pathway protein biosynthesis; polypeptide chain elongation. Involved in peptide bond synthesis. Stimulates efficient translation and peptide-bond synthesis on native or reconstituted 70S ribosomes in vitro. Probably functions indirectly by altering the affinity of the ribosome for aminoacyl-tRNA, thus increasing their reactivity as acceptors for peptidyl transferase. The chain is Elongation factor P from Synechococcus sp. (strain WH7803).